We begin with the raw amino-acid sequence, 297 residues long: Mitochondrial glycine transporter (297 aa).

Solcar repeat units follow at residues 5–81, 105–189, and 211–295; these read TGHL…MRTA, LSMY…LKHT, and TSTA…LIKH. The next 6 membrane-spanning stretches (helical) occupy residues 8-33, 56-82, 111-136, 164-187, 215-241, and 270-288; these read LIGG…TRFQ, GTLP…RTAL, LVTG…VRYE, GFGP…EKLK, INST…KTRM, and GLSM…AWGI.

Belongs to the mitochondrial carrier (TC 2.A.29) family. SLC25A38 subfamily.

It is found in the mitochondrion inner membrane. It carries out the reaction glycine(in) = glycine(out). Mitochondrial glycine transporter that imports glycine into the mitochondrial matrix. Plays an important role in providing glycine for the first enzymatic step in heme biosynthesis, the condensation of glycine with succinyl-CoA to produce 5-aminolevulinate (ALA) in the mitochondrial matrix. The sequence is that of Mitochondrial glycine transporter from Candida glabrata (strain ATCC 2001 / BCRC 20586 / JCM 3761 / NBRC 0622 / NRRL Y-65 / CBS 138) (Yeast).